We begin with the raw amino-acid sequence, 501 residues long: MSDDDQELGITESKEHSPGDWYAEVVQKAGLADYAPMGGFIVTRPRGYALWEAIQDNLDGWFKDTGVENAYFPMFIPEDYLEREKDIVEGFDPEVAWVTQGGHDDLDQRLAVRPTSESIIAPYLSQWVRSHRDLPLRVNQWNSVVRWEATETKPFFRTKEFLWQEGHTAHATDEAAWAETTLRLDQYHRLYEDVLGIPVLRGRKPDHDKFPGADTTMSVEALMPDGKSVQGGTSHHLGQSFADAFDITFADEDEAERTAYTTSWGLSWRAIGALVMSHSDDQGLVLPPTVAPKQVVIVPIWQEDTKDDVEQYGAEIAAELEAQGVRVHFDDRDGRNPGFKFNEWELNGVPVRFEIGPNEVEDDEVTVVHRPDGESTVEDRAAIADRVHDHLDEVYDKLYDAAADRLAENVREADNRADILGTIGQHGGYVKAPWCGDQDCEAEIKDQIAAEIVMVPLGEDSAARAASELEGERVPEPDHDGEDCAICGDEATRTAYFAKSY.

This sequence belongs to the class-II aminoacyl-tRNA synthetase family. ProS type 3 subfamily. Homodimer.

It is found in the cytoplasm. It catalyses the reaction tRNA(Pro) + L-proline + ATP = L-prolyl-tRNA(Pro) + AMP + diphosphate. Its function is as follows. Catalyzes the attachment of proline to tRNA(Pro) in a two-step reaction: proline is first activated by ATP to form Pro-AMP and then transferred to the acceptor end of tRNA(Pro). The chain is Proline--tRNA ligase from Halobacterium salinarum (strain ATCC 29341 / DSM 671 / R1).